The following is a 143-amino-acid chain: Transcriptional regulator MraZ (143 aa).

SpoVT-AbrB domains are found at residues 5–47 (TYAP…SQRE) and 76–119 (ASAE…DAEA).

The protein belongs to the MraZ family. Forms oligomers.

The protein localises to the cytoplasm. It localises to the nucleoid. This chain is Transcriptional regulator MraZ, found in Leifsonia xyli subsp. xyli (strain CTCB07).